The primary structure comprises 406 residues: E3 ubiquitin-protein ligase RING1 (406 aa).

Phosphothreonine is present on T24. Residues 30–234 (MDGTEIAVSP…GGAGSEDSGD (205 aa)) form a necessary for transcriptional repression region. Phosphoserine is present on S38. An RING-type zinc finger spans residues 48 to 88 (CPICLDMLKNTMTTKECLHRFCSDCIVTALRSGNKECPTCR). Residues S140, S187, and S190 each carry the phosphoserine modification. Disordered stretches follow at residues 151–263 (HRAQ…GEIE) and 309–354 (QQQE…PSLE). Acidic residues predominate over residues 175–187 (EPGEGEGDGEDVS). The short motif at 201–204 (KRPR) is the Nuclear localization signal element. A compositionally biased stretch (gly residues) spans 214 to 228 (GTGGGAAGGACGGAG). The residue at position 215 (T215) is a Phosphothreonine. Phosphoserine is present on residues S229 and S232. Residues 230 to 406 (EDSGDRGGTL…LCYAPTKDPK (177 aa)) are necessary for interaction with CBX2. Residues 235-244 (RGGTLGGGTL) are compositionally biased toward gly residues. The segment covering 246–258 (PPSPPGAPSPPEP) has biased composition (pro residues). Residues S248 and S254 each carry the phosphoserine modification. Gly residues predominate over residues 317 to 343 (GGPGGGASDTGGPDGGGGERGVAGGGE).

Component of chromatin-associated Polycomb (PcG) complexes. Part of the E2F6.com-1 complex in G0 phase composed of E2F6, MGA, MAX, TFDP1, CBX3, BAT8, EUHMTASE1, RING1, RNF2/RING2 MBLR, L3MBTL2 and YAF2. Interacts with CBX2 and PCGF6. Component of a PRC1-like complex. Component of repressive BCOR complex containing Polycomb group subcomplex at least composed of RYBP, PCGF1, BCOR and RNF2/RING2. Interacts with PHC2, PCGF2, RNF2; CBX6, CBX7 and CBX8. Interacts with BMI1. Interacts with MN1. Interacts with USP26.

It localises to the nucleus speckle. The enzyme catalyses S-ubiquitinyl-[E2 ubiquitin-conjugating enzyme]-L-cysteine + [acceptor protein]-L-lysine = [E2 ubiquitin-conjugating enzyme]-L-cysteine + N(6)-ubiquitinyl-[acceptor protein]-L-lysine.. It participates in protein modification; protein ubiquitination. Functionally, constitutes one of the E3 ubiquitin-protein ligases that mediate monoubiquitination of 'Lys-119' of histone H2A, thereby playing a central role in histone code and gene regulation. H2A 'Lys-119' ubiquitination gives a specific tag for epigenetic transcriptional repression and participates in X chromosome inactivation of female mammals. Essential component of a Polycomb group (PcG) multiprotein PRC1-like complex, a complex class required to maintain the transcriptionally repressive state of many genes, including Hox genes, throughout development. PcG PRC1 complex acts via chromatin remodeling and modification of histones, rendering chromatin heritably changed in its expressibility. Compared to RNF2/RING2, it does not have the main E3 ubiquitin ligase activity on histone H2A, and it may rather act as a modulator of RNF2/RING2 activity. The chain is E3 ubiquitin-protein ligase RING1 from Mus musculus (Mouse).